Here is a 948-residue protein sequence, read N- to C-terminus: Valine--tRNA ligase (948 aa).

The short motif at 40-50 (PNVTGSLHMGH) is the 'HIGH' region element. A 'KMSKS' region motif is present at residues 551–555 (KMSKS). Lysine 554 contacts ATP. Residues 879–947 (LIDKGAELAR…LAEQHARISS (69 aa)) are a coiled coil.

Belongs to the class-I aminoacyl-tRNA synthetase family. ValS type 1 subfamily. In terms of assembly, monomer.

The protein resides in the cytoplasm. The catalysed reaction is tRNA(Val) + L-valine + ATP = L-valyl-tRNA(Val) + AMP + diphosphate. Its function is as follows. Catalyzes the attachment of valine to tRNA(Val). As ValRS can inadvertently accommodate and process structurally similar amino acids such as threonine, to avoid such errors, it has a 'posttransfer' editing activity that hydrolyzes mischarged Thr-tRNA(Val) in a tRNA-dependent manner. This Pseudomonas fluorescens (strain ATCC BAA-477 / NRRL B-23932 / Pf-5) protein is Valine--tRNA ligase.